We begin with the raw amino-acid sequence, 486 residues long: Malonate-semialdehyde dehydrogenase 2 (486 aa).

Residues phenylalanine 154, lysine 178, glutamate 181, arginine 182, and serine 231 each coordinate NAD(+). Cysteine 286 serves as the catalytic Nucleophile. Glutamate 386 is a binding site for NAD(+).

Belongs to the aldehyde dehydrogenase family. IolA subfamily. In terms of assembly, homotetramer.

The catalysed reaction is 3-oxopropanoate + NAD(+) + CoA + H2O = hydrogencarbonate + acetyl-CoA + NADH + H(+). It catalyses the reaction 2-methyl-3-oxopropanoate + NAD(+) + CoA + H2O = propanoyl-CoA + hydrogencarbonate + NADH + H(+). It participates in polyol metabolism; myo-inositol degradation into acetyl-CoA; acetyl-CoA from myo-inositol: step 7/7. In terms of biological role, catalyzes the oxidation of malonate semialdehyde (MSA) and methylmalonate semialdehyde (MMSA) into acetyl-CoA and propanoyl-CoA, respectively. Is involved in a myo-inositol catabolic pathway. Bicarbonate, and not CO2, is the end-product of the enzymatic reaction. This is Malonate-semialdehyde dehydrogenase 2 from Oceanobacillus iheyensis (strain DSM 14371 / CIP 107618 / JCM 11309 / KCTC 3954 / HTE831).